The primary structure comprises 388 residues: 8-amino-7-oxononanoate synthase (388 aa).

Arg23 lines the substrate pocket. Gly110 to Phe111 contributes to the pyridoxal 5'-phosphate binding site. His135 contacts substrate. Residues Ser181, His209, and Thr235 each coordinate pyridoxal 5'-phosphate. N6-(pyridoxal phosphate)lysine is present on Lys238. Position 352 (Thr352) interacts with substrate.

The protein belongs to the class-II pyridoxal-phosphate-dependent aminotransferase family. BioF subfamily. In terms of assembly, homodimer. It depends on pyridoxal 5'-phosphate as a cofactor.

It carries out the reaction 6-carboxyhexanoyl-[ACP] + L-alanine + H(+) = (8S)-8-amino-7-oxononanoate + holo-[ACP] + CO2. It participates in cofactor biosynthesis; biotin biosynthesis. Its function is as follows. Catalyzes the decarboxylative condensation of pimeloyl-[acyl-carrier protein] and L-alanine to produce 8-amino-7-oxononanoate (AON), [acyl-carrier protein], and carbon dioxide. The protein is 8-amino-7-oxononanoate synthase of Sodalis glossinidius (strain morsitans).